The sequence spans 324 residues: Adenine deaminase (324 aa).

Residues histidine 11, histidine 13, and histidine 189 each contribute to the Zn(2+) site. The active-site Proton donor is the glutamate 192. A Zn(2+)-binding site is contributed by aspartate 270. Aspartate 271 lines the substrate pocket.

Belongs to the metallo-dependent hydrolases superfamily. Adenosine and AMP deaminases family. Adenine deaminase type 2 subfamily. Zn(2+) is required as a cofactor.

The catalysed reaction is adenine + H2O + H(+) = hypoxanthine + NH4(+). In terms of biological role, catalyzes the hydrolytic deamination of adenine to hypoxanthine. Plays an important role in the purine salvage pathway and in nitrogen catabolism. This Rhizobium meliloti (strain 1021) (Ensifer meliloti) protein is Adenine deaminase.